Here is a 66-residue protein sequence, read N- to C-terminus: MNAKDLRDKTVDELRDELANLKKESFNLRFQQATGQLENTAGIKAARRNAARVKTILNEKAAAAAE.

The protein belongs to the universal ribosomal protein uL29 family.

This is Large ribosomal subunit protein uL29 from Ruegeria sp. (strain TM1040) (Silicibacter sp.).